A 203-amino-acid chain; its full sequence is dTTP/UTP pyrophosphatase (203 aa).

Asp-74 (proton acceptor) is an active-site residue.

The protein belongs to the Maf family. YhdE subfamily. A divalent metal cation is required as a cofactor.

It is found in the cytoplasm. The enzyme catalyses dTTP + H2O = dTMP + diphosphate + H(+). The catalysed reaction is UTP + H2O = UMP + diphosphate + H(+). Nucleoside triphosphate pyrophosphatase that hydrolyzes dTTP and UTP. May have a dual role in cell division arrest and in preventing the incorporation of modified nucleotides into cellular nucleic acids. The sequence is that of dTTP/UTP pyrophosphatase from Treponema denticola (strain ATCC 35405 / DSM 14222 / CIP 103919 / JCM 8153 / KCTC 15104).